A 451-amino-acid chain; its full sequence is Serine--tRNA ligase (451 aa).

Position 258 to 260 (258 to 260 (TSE)) interacts with L-serine. 289 to 291 (RSE) is an ATP binding site. E312 is an L-serine binding site. 376–379 (EISS) contacts ATP. S411 contributes to the L-serine binding site.

Belongs to the class-II aminoacyl-tRNA synthetase family. Type-1 seryl-tRNA synthetase subfamily. Homodimer. The tRNA molecule binds across the dimer.

The protein resides in the cytoplasm. It catalyses the reaction tRNA(Ser) + L-serine + ATP = L-seryl-tRNA(Ser) + AMP + diphosphate + H(+). The catalysed reaction is tRNA(Sec) + L-serine + ATP = L-seryl-tRNA(Sec) + AMP + diphosphate + H(+). The protein operates within aminoacyl-tRNA biosynthesis; selenocysteinyl-tRNA(Sec) biosynthesis; L-seryl-tRNA(Sec) from L-serine and tRNA(Sec): step 1/1. Catalyzes the attachment of serine to tRNA(Ser). Is also able to aminoacylate tRNA(Sec) with serine, to form the misacylated tRNA L-seryl-tRNA(Sec), which will be further converted into selenocysteinyl-tRNA(Sec). This chain is Serine--tRNA ligase, found in Bordetella bronchiseptica (strain ATCC BAA-588 / NCTC 13252 / RB50) (Alcaligenes bronchisepticus).